The chain runs to 456 residues: N(6)-adenosine-methyltransferase non-catalytic subunit METTL14 (456 aa).

The segment at 50 to 75 (TCRASYDTSAPNAKRKYLDEGETDED) is disordered. Interaction with METTL3 regions lie at residues 135 to 136 (RD) and 237 to 238 (SG). Residues 245–254 (RVCLRKWGYR) form a positively charged region required for RNA-binding region. 2 interaction with METTL3 regions span residues 255–258 (RCED) and 278–287 (KAVFQRTKEH). The interval 297 to 298 (KR) is positively charged region required for RNA-binding. The tract at residues 308 to 312 (NVDID) is interaction with METTL3. The interval 393 to 456 (ERLRPKSPPP…GAHRGGFPPR (64 aa)) is disordered. Ser399 is modified (phosphoserine). The segment covering 409 to 423 (GGGAPRGGGRGGTSA) has biased composition (gly residues). A compositionally biased stretch (basic and acidic residues) spans 425-440 (RGRERNRSNFRGERGG). Gly residues predominate over residues 441–450 (FRGGRGGAHR).

This sequence belongs to the MT-A70-like family. Heterodimer; heterodimerizes with METTL3 to form an antiparallel heterodimer that constitutes an active methyltransferase. Component of the WMM complex, a N6-methyltransferase complex composed of a catalytic subcomplex, named MAC, and of an associated subcomplex, named MACOM. The MAC subcomplex is composed of METTL3 and METTL14. The MACOM subcomplex is composed of WTAP, ZC3H13, CBLL1/HAKAI, VIRMA, and, in some cases of RBM15 (RBM15 or RBM15B).

It localises to the nucleus. Functionally, the METTL3-METTL14 heterodimer forms a N6-methyltransferase complex that methylates adenosine residues at the N(6) position of some mRNAs and regulates the circadian clock, differentiation of embryonic stem cells and cortical neurogenesis. In the heterodimer formed with METTL3, METTL14 constitutes the RNA-binding scaffold that recognizes the substrate rather than the catalytic core. N6-methyladenosine (m6A), which takes place at the 5'-[AG]GAC-3' consensus sites of some mRNAs, plays a role in mRNA stability and processing. M6A acts as a key regulator of mRNA stability by promoting mRNA destabilization and degradation. In embryonic stem cells (ESCs), m6A methylation of mRNAs encoding key naive pluripotency-promoting transcripts results in transcript destabilization. M6A regulates spermatogonial differentiation and meiosis and is essential for male fertility and spermatogenesis. M6A also regulates cortical neurogenesis: m6A methylation of transcripts related to transcription factors, neural stem cells, the cell cycle and neuronal differentiation during brain development promotes their destabilization and decay, promoting differentiation of radial glial cells. This Homo sapiens (Human) protein is N(6)-adenosine-methyltransferase non-catalytic subunit METTL14.